Consider the following 306-residue polypeptide: MELKDYYAIMGVKPTDDLKTIKTAYRRLARKYHPDVSKEPDAEARFKEVAEAWEVLSDEQRRAEYDQMWQHRNDPQFNRQFHHGDGQSFNAEDFDDIFSSIFGQHARQSRQRPATRGHDIEIEVAVFLEETLTEHKRTISYNLPVYNAFGMIEQEIPKTLNVKIPAGVGNGQRIRLKGQGTPGENGGPNGDLWLVIHIAPHPLFDIVGQDLEIVVPVSPWEAALGAKVTVPTLKESILLTIPPGSQAGQRLRVKGKGLVSKKQTGDLYAVLKIVMPPKPDENTAALWQQLADAQSSFDPRKDWGKA.

Residues 5 to 69 (DYYAIMGVKP…QRRAEYDQMW (65 aa)) enclose the J domain.

Its subcellular location is the cytoplasm. It is found in the nucleoid. Functionally, DNA-binding protein that preferentially recognizes a curved DNA sequence. It is probably a functional analog of DnaJ; displays overlapping activities with DnaJ, but functions under different conditions, probably acting as a molecular chaperone in an adaptive response to environmental stresses other than heat shock. Lacks autonomous chaperone activity; binds native substrates and targets them for recognition by DnaK. Its activity is inhibited by the binding of CbpM. This is Curved DNA-binding protein from Escherichia coli (strain K12 / MC4100 / BW2952).